The following is a 218-amino-acid chain: MATRSPSVVISDDEPGYDLDLFCIPNHYAEDLEKVFIPHGLIMDRTERLARDVMKEMGGHHIVALCVLKGGYKFFADLLDYIKALNRNSDRSIPMTVDFIRLKSYCNDQSTGDIKVIGGDDLSTLTGKNVLIVEDIIDTGKTMQTLLSLVKQHNPKMVKVASLLVKRTPRSVGYRPDFVGFEIPDKFVVGYALDYNEYFRDLNHVCVISETGKAKYKA.

Ala2 is subject to N-acetylalanine. Lys69 contacts GMP. At Lys103 the chain carries N6-acetyllysine. Lys115 is covalently cross-linked (Glycyl lysine isopeptide (Lys-Gly) (interchain with G-Cter in SUMO1); alternate). Residue Lys115 forms a Glycyl lysine isopeptide (Lys-Gly) (interchain with G-Cter in SUMO2); alternate linkage. Residues 134 to 142 (EDIIDTGKT), Lys166, 186 to 188 (KFV), and Asp194 each bind GMP. The active-site Proton acceptor is Asp138. Thr142 is subject to Phosphothreonine. Residue Asp194 coordinates Mg(2+).

This sequence belongs to the purine/pyrimidine phosphoribosyltransferase family. In terms of assembly, homotetramer. Requires Mg(2+) as cofactor.

The protein resides in the cytoplasm. It catalyses the reaction IMP + diphosphate = hypoxanthine + 5-phospho-alpha-D-ribose 1-diphosphate. The enzyme catalyses GMP + diphosphate = guanine + 5-phospho-alpha-D-ribose 1-diphosphate. The protein operates within purine metabolism; IMP biosynthesis via salvage pathway; IMP from hypoxanthine: step 1/1. Its function is as follows. Converts guanine to guanosine monophosphate, and hypoxanthine to inosine monophosphate. Transfers the 5-phosphoribosyl group from 5-phosphoribosylpyrophosphate onto the purine. Plays a central role in the generation of purine nucleotides through the purine salvage pathway. The polypeptide is Hypoxanthine-guanine phosphoribosyltransferase (HPRT1) (Sus scrofa (Pig)).